A 364-amino-acid polypeptide reads, in one-letter code: Ribosomal RNA large subunit methyltransferase M (364 aa).

S-adenosyl-L-methionine contacts are provided by residues Ser198, 231 to 234, Asp250, Asp270, and Asp286; that span reads APGG. The Proton acceptor role is filled by Lys315.

This sequence belongs to the class I-like SAM-binding methyltransferase superfamily. RNA methyltransferase RlmE family. RlmM subfamily. In terms of assembly, monomer.

It localises to the cytoplasm. It catalyses the reaction cytidine(2498) in 23S rRNA + S-adenosyl-L-methionine = 2'-O-methylcytidine(2498) in 23S rRNA + S-adenosyl-L-homocysteine + H(+). Catalyzes the 2'-O-methylation at nucleotide C2498 in 23S rRNA. The protein is Ribosomal RNA large subunit methyltransferase M of Azoarcus sp. (strain BH72).